The following is a 118-amino-acid chain: Large ribosomal subunit protein uL22 (118 aa).

The protein belongs to the universal ribosomal protein uL22 family. As to quaternary structure, part of the 50S ribosomal subunit.

This protein binds specifically to 23S rRNA; its binding is stimulated by other ribosomal proteins, e.g. L4, L17, and L20. It is important during the early stages of 50S assembly. It makes multiple contacts with different domains of the 23S rRNA in the assembled 50S subunit and ribosome. Its function is as follows. The globular domain of the protein is located near the polypeptide exit tunnel on the outside of the subunit, while an extended beta-hairpin is found that lines the wall of the exit tunnel in the center of the 70S ribosome. This chain is Large ribosomal subunit protein uL22, found in Leuconostoc mesenteroides subsp. mesenteroides (strain ATCC 8293 / DSM 20343 / BCRC 11652 / CCM 1803 / JCM 6124 / NCDO 523 / NBRC 100496 / NCIMB 8023 / NCTC 12954 / NRRL B-1118 / 37Y).